The sequence spans 1294 residues: von Willebrand factor A domain-containing protein 3B (1294 aa).

Residues Cys508 to Met684 form the VWFA domain. Disordered regions lie at residues Cys732–Trp754, Arg778–Arg803, Ala1012–Lys1036, and Asp1193–Ala1247. Polar residues predominate over residues Asp738–Asn748. Residues Arg778–Ser787 show a composition bias toward low complexity. The segment covering Asp1193 to Arg1202 has biased composition (basic and acidic residues). Basic residues predominate over residues Glu1203–Ala1212. The span at Lys1213–Ser1236 shows a compositional bias: low complexity.

It is found in the cytoplasm. The chain is von Willebrand factor A domain-containing protein 3B (VWA3B) from Homo sapiens (Human).